Here is an 88-residue protein sequence, read N- to C-terminus: Small ribosomal subunit protein eS21 (88 aa).

It belongs to the eukaryotic ribosomal protein eS21 family. Component of the 40S small ribosomal subunit.

The protein resides in the cytoplasm. Its subcellular location is the cytosol. It is found in the rough endoplasmic reticulum. The protein is Small ribosomal subunit protein eS21 (rps-21) of Caenorhabditis elegans.